Consider the following 208-residue polypeptide: Phosphoribosyl-dephospho-CoA transferase (208 aa).

Catalysis depends on residues Asp133 and Asp135.

Belongs to the MdcG family.

The catalysed reaction is apo-[malonate decarboxylase ACP] + 2'-(5''-triphospho-alpha-D-ribosyl)-3'-dephospho-CoA = holo-[malonate decarboxylase ACP] + diphosphate. Functionally, transfers 2'-(5-triphosphoribosyl)-3'-dephosphocoenzyme-A to the apo-[acyl-carrier-protein] of the malonate decarboxylase to yield holo-[acyl-carrier-protein]. The sequence is that of Phosphoribosyl-dephospho-CoA transferase from Pseudomonas fluorescens (strain ATCC BAA-477 / NRRL B-23932 / Pf-5).